The sequence spans 254 residues: Coiled-coil domain-containing protein 152 (254 aa).

A coiled-coil region spans residues 61-246; that stretch reads SIKEECATLH…LEQRLSVGKD (186 aa).

In terms of tissue distribution, detected in stomach.

The protein is Coiled-coil domain-containing protein 152 (CCDC152) of Homo sapiens (Human).